The sequence spans 272 residues: Phosphate import ATP-binding protein PstB 1 (272 aa).

The region spanning Ile26–Ile267 is the ABC transporter domain. Residue Gly58–Ser65 participates in ATP binding.

The protein belongs to the ABC transporter superfamily. Phosphate importer (TC 3.A.1.7) family. In terms of assembly, the complex is composed of two ATP-binding proteins (PstB), two transmembrane proteins (PstC and PstA) and a solute-binding protein (PstS).

The protein resides in the cell inner membrane. It carries out the reaction phosphate(out) + ATP + H2O = ADP + 2 phosphate(in) + H(+). Part of the ABC transporter complex PstSACB involved in phosphate import. Responsible for energy coupling to the transport system. This chain is Phosphate import ATP-binding protein PstB 1, found in Vibrio vulnificus (strain YJ016).